Reading from the N-terminus, the 373-residue chain is Putative C-P lyase subunit protein HtxH (373 aa).

This sequence belongs to the PhnI family.

Functionally, belongs to an operon involved in hypophosphite oxidation. Exact function not known. This chain is Putative C-P lyase subunit protein HtxH (htxH), found in Stutzerimonas stutzeri (Pseudomonas stutzeri).